The chain runs to 273 residues: Protein BRANCHLESS TRICHOME (273 aa).

Residues Met1–Thr12 are compositionally biased toward polar residues. Residues Met1–Asp30 form a disordered region. Positions Ile69 to Lys199 form a coiled coil.

In terms of assembly, interacts with STI.

Acts as a key regulator of trichome branching. Could participate with STI in the same pathway. Also plays a role in integrating endoreplication levels with cell shape. This Arabidopsis thaliana (Mouse-ear cress) protein is Protein BRANCHLESS TRICHOME (BLT).